The sequence spans 194 residues: tRNA(Phe) 7-((3-amino-3-carboxypropyl)-4-demethylwyosine(37)-N(4))-methyltransferase 1 (194 aa).

Belongs to the TYW3 family.

It carries out the reaction 4-demethyl-7-[(3S)-3-amino-3-carboxypropyl]wyosine(37) in tRNA(Phe) + S-adenosyl-L-methionine = 7-[(3S)-3-amino-3-carboxypropyl]wyosine(37) in tRNA(Phe) + S-adenosyl-L-homocysteine + H(+). S-adenosyl-L-methionine-dependent methyltransferase that acts as a component of the wyosine derivatives biosynthesis pathway. Probably methylates N-4 position of wybutosine-86 to produce wybutosine-72. The protein is tRNA(Phe) 7-((3-amino-3-carboxypropyl)-4-demethylwyosine(37)-N(4))-methyltransferase 1 of Pyrococcus abyssi (strain GE5 / Orsay).